The following is a 357-amino-acid chain: Serpentine receptor class epsilon-30 (357 aa).

A run of 7 helical transmembrane segments spans residues 31–51, 61–81, 121–141, 165–185, 192–212, 253–273, and 283–303; these read IFEL…IFVM, LMFL…GKFI, LLIF…FGIL, IPII…LAII, FLAR…FLFI, LVVV…ALTF, and LIEN…MFSI.

Belongs to the nematode receptor-like protein sre family.

Its subcellular location is the membrane. This Caenorhabditis elegans protein is Serpentine receptor class epsilon-30 (sre-30).